A 253-amino-acid polypeptide reads, in one-letter code: 7-carboxy-7-deazaguanine synthase (253 aa).

Substrate contacts are provided by residues 12-14 and Arg32; that span reads WQG. The Radical SAM core domain maps to 23–253; it reads AFGRRQIFVR…FQVHKYLNVL (231 aa). Residues Cys36, Cys40, and Cys43 each contribute to the [4Fe-4S] cluster site. Ser45 is a Mg(2+) binding site. Thr98 lines the substrate pocket. An S-adenosyl-L-methionine-binding site is contributed by Gly100.

It belongs to the radical SAM superfamily. 7-carboxy-7-deazaguanine synthase family. In terms of assembly, homodimer. [4Fe-4S] cluster serves as cofactor. S-adenosyl-L-methionine is required as a cofactor. It depends on Mg(2+) as a cofactor.

It catalyses the reaction 6-carboxy-5,6,7,8-tetrahydropterin + H(+) = 7-carboxy-7-deazaguanine + NH4(+). The protein operates within purine metabolism; 7-cyano-7-deazaguanine biosynthesis. In terms of biological role, catalyzes the complex heterocyclic radical-mediated conversion of 6-carboxy-5,6,7,8-tetrahydropterin (CPH4) to 7-carboxy-7-deazaguanine (CDG), a step common to the biosynthetic pathways of all 7-deazapurine-containing compounds. This Thermococcus kodakarensis (strain ATCC BAA-918 / JCM 12380 / KOD1) (Pyrococcus kodakaraensis (strain KOD1)) protein is 7-carboxy-7-deazaguanine synthase.